We begin with the raw amino-acid sequence, 517 residues long: Serine carboxypeptidase ctsa-3.2 (517 aa).

The N-terminal stretch at 1–21 (MWWTSLVFSVLLFDLIFISNC) is a signal peptide. Ser172 is an active-site residue. N-linked (GlcNAc...) asparagine glycosylation is present at Asn269. Active-site residues include Asp418 and His485.

It belongs to the peptidase S10 family.

The chain is Serine carboxypeptidase ctsa-3.2 from Caenorhabditis elegans.